A 431-amino-acid chain; its full sequence is Cyclic GMP-AMP synthase-like receptor (431 aa).

ATP-binding positions include S73 and 85–87 (EFD). Mg(2+) is bound by residues E85, D87, and D212. Residue D212 participates in GTP binding. ATP contacts are provided by residues K290 and 304–308 (SYALK). Position 316 (E316) interacts with Mn(2+).

The protein belongs to the mab-21 family. The cofactor is Mg(2+). Requires Mn(2+) as cofactor.

It carries out the reaction GTP + ATP = 2',3'-cGAMP + 2 diphosphate. The catalysed reaction is GTP + ATP = pppGp(2'-5')A + diphosphate. It catalyses the reaction pppGp(2'-5')A = 2',3'-cGAMP + diphosphate. In terms of biological role, nucleotidyltransferase that catalyzes the formation of cyclic GMP-AMP (2',3'-cGAMP) from ATP and GTP and plays a key role in innate immunity. Acts as a key sensor of double-stranded RNA (dsRNA), the presence of dsRNA in the cytoplasm being a danger signal that triggers the immune responses. Directly binds dsRNA, activating the nucleotidyltransferase activity, leading to synthesis of 2',3'-cGAMP, a second messenger that binds to and activates Sting, thereby triggering the immune response via activation of the NF-kappa-B transcription factor. The protein is Cyclic GMP-AMP synthase-like receptor of Frankliniella occidentalis (Western flower thrips).